Reading from the N-terminus, the 71-residue chain is Translation initiation factor IF-1 (71 aa).

In terms of domain architecture, S1-like spans 1 to 71 (MKEKNIEMQG…SKGRIIFRSR (71 aa)).

It belongs to the IF-1 family. As to quaternary structure, component of the 30S ribosomal translation pre-initiation complex which assembles on the 30S ribosome in the order IF-2 and IF-3, IF-1 and N-formylmethionyl-tRNA(fMet); mRNA recruitment can occur at any time during PIC assembly.

The protein resides in the cytoplasm. Functionally, one of the essential components for the initiation of protein synthesis. Stabilizes the binding of IF-2 and IF-3 on the 30S subunit to which N-formylmethionyl-tRNA(fMet) subsequently binds. Helps modulate mRNA selection, yielding the 30S pre-initiation complex (PIC). Upon addition of the 50S ribosomal subunit IF-1, IF-2 and IF-3 are released leaving the mature 70S translation initiation complex. In Buchnera aphidicola subsp. Cinara cedri (strain Cc), this protein is Translation initiation factor IF-1.